The primary structure comprises 265 residues: Tryptophan synthase alpha chain (265 aa).

Active-site proton acceptor residues include E49 and D60.

The protein belongs to the TrpA family. In terms of assembly, tetramer of two alpha and two beta chains.

The enzyme catalyses (1S,2R)-1-C-(indol-3-yl)glycerol 3-phosphate + L-serine = D-glyceraldehyde 3-phosphate + L-tryptophan + H2O. It participates in amino-acid biosynthesis; L-tryptophan biosynthesis; L-tryptophan from chorismate: step 5/5. Its function is as follows. The alpha subunit is responsible for the aldol cleavage of indoleglycerol phosphate to indole and glyceraldehyde 3-phosphate. The protein is Tryptophan synthase alpha chain of Polynucleobacter asymbioticus (strain DSM 18221 / CIP 109841 / QLW-P1DMWA-1) (Polynucleobacter necessarius subsp. asymbioticus).